The primary structure comprises 182 residues: Ribosome-recycling factor (182 aa).

The interval 137 to 158 (KKSEKESEISEDQSRDEQDNVQ) is disordered.

It belongs to the RRF family.

It is found in the cytoplasm. In terms of biological role, responsible for the release of ribosomes from messenger RNA at the termination of protein biosynthesis. May increase the efficiency of translation by recycling ribosomes from one round of translation to another. This Prochlorococcus marinus (strain MIT 9211) protein is Ribosome-recycling factor.